Reading from the N-terminus, the 573-residue chain is Membrane protein insertase YidC (573 aa).

The chain crosses the membrane as a helical span at residues 6–26 (VFLIFAWLMVAALLWMEWGKD). Positions 63-82 (PQAGSPAAVPATSTTTATPA) are disordered. Helical transmembrane passes span 355-375 (FSIM…LHSF), 379-399 (WGWA…PLSA), 446-466 (GGCL…WVLV), 488-508 (PYFI…KLTP), and 524-544 (PLVF…YWVV).

It belongs to the OXA1/ALB3/YidC family. Type 1 subfamily. Interacts with the Sec translocase complex via SecD. Specifically interacts with transmembrane segments of nascent integral membrane proteins during membrane integration.

The protein resides in the cell inner membrane. Its function is as follows. Required for the insertion and/or proper folding and/or complex formation of integral membrane proteins into the membrane. Involved in integration of membrane proteins that insert both dependently and independently of the Sec translocase complex, as well as at least some lipoproteins. Aids folding of multispanning membrane proteins. The polypeptide is Membrane protein insertase YidC (Xanthomonas campestris pv. campestris (strain 8004)).